A 709-amino-acid chain; its full sequence is Nucleobase-ascorbate transporter 12 (709 aa).

Residues 1-145 (MSSSDPKPGP…GSGDPVRRPG (145 aa)) are disordered. Pro residues predominate over residues 7–19 (KPGPKPGPWPPTP). Residue serine 40 is modified to Phosphoserine. The span at 41 to 53 (GETTATDSSSGQL) shows a compositional bias: polar residues. Basic and acidic residues-rich tracts occupy residues 89 to 98 (ETDKDKKEKP) and 113 to 122 (QPVKRRRDSD). A run of 12 helical transmembrane segments spans residues 190-210 (YLSM…AMGG), 218-238 (VVST…SFGS), 240-260 (LPLI…IINS), 283-303 (IIIG…SLIL), 308-328 (PVVV…YGFP), 329-349 (LVGK…IFAL), 361-381 (IFLI…AFLL), 438-458 (WGVP…SVIA), 530-550 (GACV…LASI), 551-571 (PQVM…ALGL), 585-605 (IIIV…FQQY), and 639-659 (YVMN…AVIL).

The protein belongs to the nucleobase:cation symporter-2 (NCS2) (TC 2.A.40) family. As to expression, ubiquitous.

Its subcellular location is the cell membrane. This Arabidopsis thaliana (Mouse-ear cress) protein is Nucleobase-ascorbate transporter 12 (NAT12).